A 60-amino-acid chain; its full sequence is DNA gyrase inhibitor YacG (60 aa).

4 residues coordinate Zn(2+): Cys15, Cys18, Cys30, and Cys34.

Belongs to the DNA gyrase inhibitor YacG family. As to quaternary structure, interacts with GyrB. Zn(2+) serves as cofactor.

Functionally, inhibits all the catalytic activities of DNA gyrase by preventing its interaction with DNA. Acts by binding directly to the C-terminal domain of GyrB, which probably disrupts DNA binding by the gyrase. The sequence is that of DNA gyrase inhibitor YacG from Bradyrhizobium diazoefficiens (strain JCM 10833 / BCRC 13528 / IAM 13628 / NBRC 14792 / USDA 110).